The sequence spans 135 residues: Holo-[acyl-carrier-protein] synthase (135 aa).

The Mg(2+) site is built by Asp-7 and Glu-57.

Belongs to the P-Pant transferase superfamily. AcpS family. Requires Mg(2+) as cofactor.

It localises to the cytoplasm. The enzyme catalyses apo-[ACP] + CoA = holo-[ACP] + adenosine 3',5'-bisphosphate + H(+). Its function is as follows. Transfers the 4'-phosphopantetheine moiety from coenzyme A to a Ser of acyl-carrier-protein. In Corynebacterium glutamicum (strain ATCC 13032 / DSM 20300 / JCM 1318 / BCRC 11384 / CCUG 27702 / LMG 3730 / NBRC 12168 / NCIMB 10025 / NRRL B-2784 / 534), this protein is Holo-[acyl-carrier-protein] synthase.